Reading from the N-terminus, the 290-residue chain is tRNA-cytidine(32) 2-sulfurtransferase (290 aa).

Residues 36–41 (SGGKDS) carry the PP-loop motif motif. [4Fe-4S] cluster is bound by residues Cys-111, Cys-114, and Cys-202. A disordered region spans residues 259-290 (DPWLDAEDEEAEDCGEPAGDGVVSLGGARGGR). The span at 262-273 (LDAEDEEAEDCG) shows a compositional bias: acidic residues.

Belongs to the TtcA family. In terms of assembly, homodimer. The cofactor is Mg(2+). Requires [4Fe-4S] cluster as cofactor.

Its subcellular location is the cytoplasm. The enzyme catalyses cytidine(32) in tRNA + S-sulfanyl-L-cysteinyl-[cysteine desulfurase] + AH2 + ATP = 2-thiocytidine(32) in tRNA + L-cysteinyl-[cysteine desulfurase] + A + AMP + diphosphate + H(+). Its pathway is tRNA modification. Catalyzes the ATP-dependent 2-thiolation of cytidine in position 32 of tRNA, to form 2-thiocytidine (s(2)C32). The sulfur atoms are provided by the cysteine/cysteine desulfurase (IscS) system. In Anaeromyxobacter dehalogenans (strain 2CP-C), this protein is tRNA-cytidine(32) 2-sulfurtransferase.